A 452-amino-acid polypeptide reads, in one-letter code: Adenylyltransferase and sulfurtransferase MOCS3 (452 aa).

ATP contacts are provided by residues glycine 99, aspartate 120, 127–131, lysine 144, and 188–189; these read SNLHR and DN. Zn(2+) is bound by residues cysteine 230 and cysteine 233. Residue cysteine 247 is the Glycyl thioester intermediate; for adenylyltransferase activity of the active site. Positions 305 and 308 each coordinate Zn(2+). The Rhodanese domain maps to 354–450; the sequence is KTKAHLLLDV…WTNQVDQSFP (97 aa). Cysteine 409 (cysteine persulfide intermediate; for sulfurtransferase activity) is an active-site residue.

The protein in the N-terminal section; belongs to the HesA/MoeB/ThiF family. UBA4 subfamily. Zn(2+) serves as cofactor.

The protein resides in the cytoplasm. It is found in the cytosol. The enzyme catalyses [molybdopterin-synthase sulfur-carrier protein]-C-terminal Gly-Gly + ATP + H(+) = [molybdopterin-synthase sulfur-carrier protein]-C-terminal Gly-Gly-AMP + diphosphate. It carries out the reaction [molybdopterin-synthase sulfur-carrier protein]-C-terminal Gly-Gly-AMP + S-sulfanyl-L-cysteinyl-[cysteine desulfurase] + AH2 = [molybdopterin-synthase sulfur-carrier protein]-C-terminal-Gly-aminoethanethioate + L-cysteinyl-[cysteine desulfurase] + A + AMP + 2 H(+). Its pathway is tRNA modification; 5-methoxycarbonylmethyl-2-thiouridine-tRNA biosynthesis. It functions in the pathway cofactor biosynthesis; molybdopterin biosynthesis. Its function is as follows. Plays a central role in 2-thiolation of mcm(5)S(2)U at tRNA wobble positions of cytosolic tRNA(Lys), tRNA(Glu) and tRNA(Gln). Also essential during biosynthesis of the molybdenum cofactor. Acts by mediating the C-terminal thiocarboxylation of sulfur carriers URM1 and MOCS2A. Its N-terminus first activates URM1 and MOCS2A as acyl-adenylates (-COAMP), then the persulfide sulfur on the catalytic cysteine is transferred to URM1 and MOCS2A to form thiocarboxylation (-COSH) of their C-terminus. The reaction probably involves hydrogen sulfide that is generated from the persulfide intermediate and that acts as a nucleophile towards URM1 and MOCS2A. Subsequently, a transient disulfide bond is formed. Does not use thiosulfate as sulfur donor; NFS1 probably acting as a sulfur donor for thiocarboxylation reactions. The protein is Adenylyltransferase and sulfurtransferase MOCS3 of Drosophila virilis (Fruit fly).